The chain runs to 502 residues: Betaine aldehyde dehydrogenase, chloroplastic (502 aa).

A chloroplast-targeting transit peptide spans 1–7; that stretch reads MAFPIPA. 240-245 contributes to the NAD(+) binding site; it reads GSSATG. The active-site Proton acceptor is glutamate 262. The active-site Nucleophile is cysteine 296.

It belongs to the aldehyde dehydrogenase family. Homodimer.

Its subcellular location is the plastid. The protein localises to the chloroplast. The catalysed reaction is betaine aldehyde + NAD(+) + H2O = glycine betaine + NADH + 2 H(+). The protein operates within amine and polyamine biosynthesis; betaine biosynthesis via choline pathway; betaine from betaine aldehyde: step 1/1. This Atriplex hortensis (Mountain spinach) protein is Betaine aldehyde dehydrogenase, chloroplastic.